The primary structure comprises 1136 residues: Solute carrier family 12 member 2 (1136 aa).

Disordered regions lie at residues 1–73 (MSAS…SVSG) and 91–121 (PDAA…QQHH). The Cytoplasmic portion of the chain corresponds to 1 to 208 (MSASPPISAG…SESKGVVKFG (208 aa)). Phosphothreonine occurs at positions 125, 129, 134, 139, and 152. A discontinuously helical transmembrane segment spans residues 209–234 (WIKGVLVRCMLNIWGVMLFIRMTWIV). Leucine 219 lines the Na(+) pocket. Asparagine 220 and isoleucine 221 together coordinate K(+). Residue tryptophan 222 coordinates Na(+). Glycine 223, valine 224, and methionine 225 together coordinate chloride. Residues 235–238 (GQAG) are Extracellular-facing. A helical membrane pass occupies residues 239-261 (IAYSCIIVIMATVVTTITGCSTS). Over 262–285 (AIATNGFVRGGGAYYLISRSLGPE) the chain is Cytoplasmic. Residues 286–314 (FGGSIGLIFAFANAVAVAMYVVGFAETVV) traverse the membrane as a helical segment. Residue phenylalanine 294 coordinates chloride. A K(+)-binding site is contributed by tyrosine 305. Residues 315-327 (ELLMDSGLLMIDQ) are Extracellular-facing. The next 2 helical transmembrane spans lie at 328-351 (TNDI…AGME) and 352-376 (WEAK…IGSF). Topologically, residues 377–407 (IAVDSKKKFGFFSYDAGILAENFGPDFRGQT) are extracellular. The discontinuously helical transmembrane segment at 408–427 (FFSVFSIFFPAATGILAGAN) threads the bilayer. Positions 417, 418, and 420 each coordinate K(+). 2 residues coordinate chloride: proline 417 and alanine 418. Chloride is bound by residues glycine 421 and isoleucine 422. Over 428-438 (ISGDLADPQMA) the chain is Cytoplasmic. The helical transmembrane segment at 439-462 (IPKGTLLAILITGLVYVGVAISAG) threads the bilayer. The Extracellular segment spans residues 463-523 (ACIVRDATGI…DFQVMSVVSG (61 aa)). Asparagine 475 and asparagine 481 each carry an N-linked (GlcNAc...) asparagine glycan. The cysteines at positions 496 and 507 are disulfide-linked. The chain crosses the membrane as a helical span at residues 524–551 (FSPLISAGIFSATLSSALASLVSAPKVF). Alanine 535, serine 538, and serine 539 together coordinate Na(+). Residues 552–576 (QALCKDNIYPGIAIFGKGYGKNNEP) lie on the Cytoplasmic side of the membrane. 2 consecutive transmembrane segments (helical) span residues 577-595 (LRGY…LIAE) and 596-619 (LNVI…FSVF). Residues phenylalanine 607 and tyrosine 611 each contribute to the chloride site. Residues 620–636 (HASLANSPGWRPSFKYY) lie on the Cytoplasmic side of the membrane. A run of 2 helical transmembrane segments spans residues 637 to 656 (NMWA…FIIN) and 657 to 672 (WWAA…SLYI). The Cytoplasmic portion of the chain corresponds to 673–1136 (YVSYKKPDVN…NHQSVLTFYS (464 aa)). The tract at residues 689–702 (ALTYHQALTHSLQL) is scissor helix. The interval 875–921 (SKDSDGDSSKPSSKATSVQNSPAVQKDEDDDGKAHTQPLLKKDKKSP) is disordered. Threonine 1059 carries the phosphothreonine modification.

It belongs to the SLC12A transporter family. In terms of assembly, homodimer; adopts a domain-swap conformation at the scissor helices connecting the transmembrane domain and C-terminal domain. In terms of processing, phosphorylated at Thr-125, Thr-129 and Thr-134 by OXSR1/OSR1 and STK39/SPAK downstream of WNK kinases (WNK1, WNK2, WNK3 or WNK4), promoting its activity.

Its subcellular location is the basolateral cell membrane. The enzyme catalyses K(+)(out) + 2 chloride(out) + Na(+)(out) = K(+)(in) + 2 chloride(in) + Na(+)(in). Activated following phosphorylation by OXSR1/OSR1 and STK39/SPAK. Inhibited by bumetanide. In terms of biological role, cation-chloride cotransporter which mediates the electroneutral transport of chloride, potassium and/or sodium ions across the membrane. Plays a vital role in the regulation of ionic balance and cell volume. Important for maintenance of endolymph volume in the otic vesicle, probably by regulating ion homeostasis. Also plays a role in normal development of the swim bladder. The protein is Solute carrier family 12 member 2 of Danio rerio (Zebrafish).